A 269-amino-acid chain; its full sequence is Orotidine 5'-phosphate decarboxylase (269 aa).

Lys-92 functions as the Proton donor in the catalytic mechanism.

The protein belongs to the OMP decarboxylase family. Type 2 subfamily.

It carries out the reaction orotidine 5'-phosphate + H(+) = UMP + CO2. Its pathway is pyrimidine metabolism; UMP biosynthesis via de novo pathway; UMP from orotate: step 2/2. In Natronomonas pharaonis (strain ATCC 35678 / DSM 2160 / CIP 103997 / JCM 8858 / NBRC 14720 / NCIMB 2260 / Gabara) (Halobacterium pharaonis), this protein is Orotidine 5'-phosphate decarboxylase.